A 254-amino-acid chain; its full sequence is NAD kinase (254 aa).

The Proton acceptor role is filled by D44. NAD(+) contacts are provided by residues 44-45 (DG), 114-115 (NE), D144, A152, 155-160 (TAYNYS), and A179.

It belongs to the NAD kinase family. Requires a divalent metal cation as cofactor.

The protein localises to the cytoplasm. It carries out the reaction NAD(+) + ATP = ADP + NADP(+) + H(+). Its function is as follows. Involved in the regulation of the intracellular balance of NAD and NADP, and is a key enzyme in the biosynthesis of NADP. Catalyzes specifically the phosphorylation on 2'-hydroxyl of the adenosine moiety of NAD to yield NADP. The protein is NAD kinase of Cereibacter sphaeroides (strain ATCC 17025 / ATH 2.4.3) (Rhodobacter sphaeroides).